The sequence spans 363 residues: UDP-3-O-acylglucosamine N-acyltransferase (363 aa).

The Proton acceptor role is filled by His-266.

It belongs to the transferase hexapeptide repeat family. LpxD subfamily. In terms of assembly, homotrimer.

The enzyme catalyses a UDP-3-O-[(3R)-3-hydroxyacyl]-alpha-D-glucosamine + a (3R)-hydroxyacyl-[ACP] = a UDP-2-N,3-O-bis[(3R)-3-hydroxyacyl]-alpha-D-glucosamine + holo-[ACP] + H(+). It participates in bacterial outer membrane biogenesis; LPS lipid A biosynthesis. In terms of biological role, catalyzes the N-acylation of UDP-3-O-acylglucosamine using 3-hydroxyacyl-ACP as the acyl donor. Is involved in the biosynthesis of lipid A, a phosphorylated glycolipid that anchors the lipopolysaccharide to the outer membrane of the cell. This is UDP-3-O-acylglucosamine N-acyltransferase from Bordetella parapertussis (strain 12822 / ATCC BAA-587 / NCTC 13253).